The following is a 212-amino-acid chain: Glycerol-3-phosphate acyltransferase (212 aa).

4 helical membrane passes run 3 to 23 (ILLA…VVVS), 78 to 98 (DVAV…PVFF), 115 to 135 (AVHP…AFFF), and 155 to 177 (FLFG…LLVW).

This sequence belongs to the PlsY family. As to quaternary structure, probably interacts with PlsX.

Its subcellular location is the cell inner membrane. The enzyme catalyses an acyl phosphate + sn-glycerol 3-phosphate = a 1-acyl-sn-glycero-3-phosphate + phosphate. It participates in lipid metabolism; phospholipid metabolism. Its function is as follows. Catalyzes the transfer of an acyl group from acyl-phosphate (acyl-PO(4)) to glycerol-3-phosphate (G3P) to form lysophosphatidic acid (LPA). This enzyme utilizes acyl-phosphate as fatty acyl donor, but not acyl-CoA or acyl-ACP. The protein is Glycerol-3-phosphate acyltransferase of Burkholderia ambifaria (strain ATCC BAA-244 / DSM 16087 / CCUG 44356 / LMG 19182 / AMMD) (Burkholderia cepacia (strain AMMD)).